The following is a 532-amino-acid chain: Probable alpha-galactosidase A (532 aa).

A signal peptide spans 1 to 21 (MDTTKSLLSTLIAIMIPLSLG). The cysteines at positions 44 and 76 are disulfide-linked. N-linked (GlcNAc...) asparagine glycans are attached at residues Asn-47, Asn-91, and Asn-121. Cys-124 and Cys-154 are disulfide-bonded. Residue Asp-152 is the Nucleophile of the active site. An N-linked (GlcNAc...) asparagine glycan is attached at Asn-201. Asp-210 functions as the Proton donor in the catalytic mechanism. The region spanning 410–531 (CSTVIPTGIV…GLPSGVDIKP (122 aa)) is the Ricin B-type lectin domain. Cystine bridges form between Cys-427-Cys-441 and Cys-466-Cys-478.

This sequence belongs to the glycosyl hydrolase 27 family.

Its subcellular location is the secreted. The enzyme catalyses Hydrolysis of terminal, non-reducing alpha-D-galactose residues in alpha-D-galactosides, including galactose oligosaccharides, galactomannans and galactolipids.. In terms of biological role, hydrolyzes a variety of simple alpha-D-galactoside as well as more complex molecules such as oligosaccharides and polysaccharides. In Aspergillus fumigatus (strain ATCC MYA-4609 / CBS 101355 / FGSC A1100 / Af293) (Neosartorya fumigata), this protein is Probable alpha-galactosidase A (aglA).